Here is a 429-residue protein sequence, read N- to C-terminus: Phosphomethylpyrimidine synthase (429 aa).

Substrate-binding positions include N66, M95, Y124, H163, 185 to 187, 226 to 229, and E265; these read SRG and DGLR. Position 269 (H269) interacts with Zn(2+). Y292 contacts substrate. Zn(2+) is bound at residue H333. [4Fe-4S] cluster is bound by residues C407, C410, and C414.

The protein belongs to the ThiC family. It depends on [4Fe-4S] cluster as a cofactor.

The catalysed reaction is 5-amino-1-(5-phospho-beta-D-ribosyl)imidazole + S-adenosyl-L-methionine = 4-amino-2-methyl-5-(phosphooxymethyl)pyrimidine + CO + 5'-deoxyadenosine + formate + L-methionine + 3 H(+). The protein operates within cofactor biosynthesis; thiamine diphosphate biosynthesis. Catalyzes the synthesis of the hydroxymethylpyrimidine phosphate (HMP-P) moiety of thiamine from aminoimidazole ribotide (AIR) in a radical S-adenosyl-L-methionine (SAM)-dependent reaction. The protein is Phosphomethylpyrimidine synthase of Pyrococcus furiosus (strain ATCC 43587 / DSM 3638 / JCM 8422 / Vc1).